A 268-amino-acid chain; its full sequence is Peptide transport system ATP-binding protein SapF (268 aa).

One can recognise an ABC transporter domain in the interval 6 to 251 (LEVRNLSKTF…PLHELTKRLI (246 aa)). Position 47–54 (47–54 (GENGSGKS)) interacts with ATP.

This sequence belongs to the ABC transporter superfamily.

Its subcellular location is the cell inner membrane. Its function is as follows. Involved in a peptide intake transport system that plays a role in the resistance to antimicrobial peptides. The sequence is that of Peptide transport system ATP-binding protein SapF (sapF) from Escherichia coli O6:H1 (strain CFT073 / ATCC 700928 / UPEC).